Here is a 1025-residue protein sequence, read N- to C-terminus: Leucyl-cystinyl aminopeptidase (1025 aa).

Met1 carries the N-acetylmethionine modification. At 1–109 (MESFTNDRLQ…DGTCSLPSAR (109 aa)) the chain is on the cytoplasmic side. The Dileucine internalization motif signature appears at 53-54 (LL). Tyr70 bears the Phosphotyrosine mark. The Dileucine internalization motif motif lies at 76–77 (LL). Ser80 and Ser91 each carry phosphoserine. Residues 96–101 (RQSPDG) are tankyrase binding. Residues 110 to 131 (TLVICVFVIVVAVSVIMVIYLL) form a helical; Signal-anchor for type II membrane protein membrane-spanning segment. Topologically, residues 132–1025 (PRCTFTKEGC…RNLKTLSQWL (894 aa)) are extracellular. Residues Asn145, Asn184, Asn215, Asn256, and Asn266 are each glycosylated (N-linked (GlcNAc...) asparagine). Glu295 contributes to the substrate binding site. Asn368 and Asn374 each carry an N-linked (GlcNAc...) asparagine glycan. 428–432 (GAMEN) lines the substrate pocket. N-linked (GlcNAc...) asparagine glycosylation occurs at Asn447. His464 lines the Zn(2+) pocket. The active-site Proton acceptor is the Glu465. Zn(2+) is bound by residues His468 and Glu487. Residues Asn525, Asn578, Asn664, Asn682, Asn695, Asn758, Asn834, Asn850, and Asn989 are each glycosylated (N-linked (GlcNAc...) asparagine).

The protein belongs to the peptidase M1 family. Homodimer. Binds tankyrases 1 and 2. Requires Zn(2+) as cofactor.

The protein resides in the cell membrane. It is found in the endomembrane system. It carries out the reaction Release of an N-terminal amino acid, Cys-|-Xaa-, in which the half-cystine residue is involved in a disulfide loop, notably in oxytocin or vasopressin. Hydrolysis rates on a range of aminoacyl arylamides exceed that for the cystinyl derivative, however.. In terms of biological role, release of an N-terminal amino acid, cleave before cysteine, leucine as well as other amino acids. Degrades peptide hormones such as oxytocin, vasopressin and angiotensin III, and plays a role in maintaining homeostasis during pregnancy. May be involved in the inactivation of neuronal peptides in the brain. Cleaves Met-enkephalin and dynorphin. Binds angiotensin IV and may be the angiotensin IV receptor in the brain. The sequence is that of Leucyl-cystinyl aminopeptidase (Lnpep) from Mus musculus (Mouse).